The primary structure comprises 119 residues: MNLENYLPVILFILVGVGVGVAPQVLGFLLGPRRPYAAKNSPYECGFEAFEDARMKFDVRYYLVAILFILFDLEIAFLFPWAVSLREIGATGFWAMMIFLGILVVGFVYEWKKGALDWE.

3 consecutive transmembrane segments (helical) span residues 9–29, 63–83, and 88–108; these read VILF…LGFL, LVAI…PWAV, and IGAT…VGFV.

It belongs to the complex I subunit 3 family. In terms of assembly, NDH-1 is composed of 14 different subunits. Subunits NuoA, H, J, K, L, M, N constitute the membrane sector of the complex.

It is found in the cell inner membrane. It catalyses the reaction a quinone + NADH + 5 H(+)(in) = a quinol + NAD(+) + 4 H(+)(out). Its function is as follows. NDH-1 shuttles electrons from NADH, via FMN and iron-sulfur (Fe-S) centers, to quinones in the respiratory chain. The immediate electron acceptor for the enzyme in this species is believed to be ubiquinone. Couples the redox reaction to proton translocation (for every two electrons transferred, four hydrogen ions are translocated across the cytoplasmic membrane), and thus conserves the redox energy in a proton gradient. In Leptothrix cholodnii (strain ATCC 51168 / LMG 8142 / SP-6) (Leptothrix discophora (strain SP-6)), this protein is NADH-quinone oxidoreductase subunit A.